A 354-amino-acid chain; its full sequence is Peptide chain release factor 1 (354 aa).

The residue at position 230 (Gln230) is an N5-methylglutamine.

It belongs to the prokaryotic/mitochondrial release factor family. Methylated by PrmC. Methylation increases the termination efficiency of RF1.

The protein resides in the cytoplasm. Peptide chain release factor 1 directs the termination of translation in response to the peptide chain termination codons UAG and UAA. This Pelobacter propionicus (strain DSM 2379 / NBRC 103807 / OttBd1) protein is Peptide chain release factor 1.